Reading from the N-terminus, the 185-residue chain is DAN domain family member 5 (185 aa).

An N-terminal signal peptide occupies residues 1-23; that stretch reads MFRSQFTTLLGLFSGAWLPTGSG. Residue Asn-39 is glycosylated (N-linked (GlcNAc...) asparagine). Intrachain disulfides connect Cys-97-Cys-144, Cys-111-Cys-158, Cys-121-Cys-179, and Cys-125-Cys-181. The region spanning 97–182 is the CTCK domain; the sequence is CKALSFVQVI…TVLVQKCQCR (86 aa).

This sequence belongs to the DAN family. In terms of tissue distribution, expressed throughout the neural retina and in the photoreceptor nuclear layer. In the retina, widely expressed in inner nuclear layer, as well as in the ganglion cell layer.

Its subcellular location is the secreted. In terms of biological role, antagonist of the extracellular signaling protein NODAL, which is required for correct left-right patterning during embryonic development. Antagonist of BMP4 signaling. Antagonist of TGF-beta signaling. Independently of its role in left-right axis establishment, plays a role during heart development, possibly through the regulation of TGF-beta/Nodal signaling pathway. Displays anti-angiogenic activity by inhibiting endothelial sprouting, migration, and proliferation. Once internalized by endothelial cells, may alter their redox and glycolytic balance. The polypeptide is DAN domain family member 5 (Dand5) (Mus musculus (Mouse)).